The chain runs to 141 residues: Hemoglobin subunit alpha (141 aa).

Positions 1 to 141 (VLSANDKSNV…VSTVLTSKYR (141 aa)) constitute a Globin domain. Serine 3 bears the Phosphoserine mark. N6-succinyllysine occurs at positions 7 and 11. The residue at position 16 (lysine 16) is an N6-acetyllysine; alternate. Position 16 is an N6-succinyllysine; alternate (lysine 16). Tyrosine 24 carries the phosphotyrosine modification. Residue serine 35 is modified to Phosphoserine. The residue at position 40 (lysine 40) is an N6-succinyllysine. A Phosphoserine modification is found at serine 49. Histidine 58 provides a ligand contact to O2. Histidine 87 provides a ligand contact to heme b. Serine 102 carries the post-translational modification Phosphoserine. Threonine 108 is modified (phosphothreonine). The residue at position 124 (serine 124) is a Phosphoserine. A phosphothreonine mark is found at threonine 134 and threonine 137. Serine 138 carries the phosphoserine modification.

The protein belongs to the globin family. As to quaternary structure, heterotetramer of two alpha chains and two beta chains. Red blood cells.

Functionally, involved in oxygen transport from the lung to the various peripheral tissues. In terms of biological role, hemopressin acts as an antagonist peptide of the cannabinoid receptor CNR1. Hemopressin-binding efficiently blocks cannabinoid receptor CNR1 and subsequent signaling. The protein is Hemoglobin subunit alpha (HBA) of Hippopotamus amphibius (Hippopotamus).